We begin with the raw amino-acid sequence, 329 residues long: Porphobilinogen deaminase (329 aa).

Cysteine 253 carries the post-translational modification S-(dipyrrolylmethanemethyl)cysteine.

The protein belongs to the HMBS family. As to quaternary structure, monomer. Dipyrromethane is required as a cofactor.

It catalyses the reaction 4 porphobilinogen + H2O = hydroxymethylbilane + 4 NH4(+). In terms of biological role, tetrapolymerization of the monopyrrole PBG into the hydroxymethylbilane pre-uroporphyrinogen in several discrete steps. This Leifsonia xyli subsp. xyli (strain CTCB07) protein is Porphobilinogen deaminase.